Consider the following 160-residue polypeptide: Transcriptional repressor NrdR (160 aa).

The segment at 3–34 (CPFCGAEDTSVVDSRVSEEGSRIRRRRQCTAC) is a zinc-finger region. Positions 49–139 (PQIIKQGGNR…VYRSFEDVGD (91 aa)) constitute an ATP-cone domain.

This sequence belongs to the NrdR family. Zn(2+) is required as a cofactor.

Functionally, negatively regulates transcription of bacterial ribonucleotide reductase nrd genes and operons by binding to NrdR-boxes. In Nitrosomonas eutropha (strain DSM 101675 / C91 / Nm57), this protein is Transcriptional repressor NrdR.